Reading from the N-terminus, the 112-residue chain is UPF0060 membrane protein SAV_4756 (112 aa).

The next 4 helical transmembrane spans lie at 8–28 (ALFVAAALFEIGGAWLVWQGV), 33–53 (GWLWIGAGVMALGVYGFVATL), 62–82 (ILAAYGGVFVAGSLAWGMVAD), and 91–111 (VTGALICLAGMTVIMYAPRGG).

It belongs to the UPF0060 family.

It is found in the cell membrane. The chain is UPF0060 membrane protein SAV_4756 from Streptomyces avermitilis (strain ATCC 31267 / DSM 46492 / JCM 5070 / NBRC 14893 / NCIMB 12804 / NRRL 8165 / MA-4680).